A 66-amino-acid chain; its full sequence is MEGISITKLLVIAVLIVLLFGTNKLRTLGSDLGAALKGFKKAMNDETPAAKKSDGVEAAPRVENKE.

Residues 1-21 (MEGISITKLLVIAVLIVLLFG) traverse the membrane as a helical segment. The disordered stretch occupies residues 46–66 (ETPAAKKSDGVEAAPRVENKE).

It belongs to the TatA/E family. TatE subfamily.

The protein resides in the cell inner membrane. Part of the twin-arginine translocation (Tat) system that transports large folded proteins containing a characteristic twin-arginine motif in their signal peptide across membranes. TatE shares overlapping functions with TatA. This Edwardsiella ictaluri (strain 93-146) protein is Probable Sec-independent protein translocase protein TatE.